We begin with the raw amino-acid sequence, 324 residues long: Phospho-N-acetylmuramoyl-pentapeptide-transferase (324 aa).

The next 9 helical transmembrane spans lie at 5–25 (VILF…PIFI), 51–71 (TPTM…IVMI), 77–97 (ISPE…LGFL), 117–137 (LIGQ…YQFA), 147–167 (VSFD…VGGS), 176–196 (LDGL…ILAW), 203–223 (VAIF…FNAH), 227–248 (VFMG…AILT), and 302–322 (VVVT…YIEV).

It belongs to the glycosyltransferase 4 family. MraY subfamily. It depends on Mg(2+) as a cofactor.

It localises to the cell membrane. It carries out the reaction UDP-N-acetyl-alpha-D-muramoyl-L-alanyl-gamma-D-glutamyl-meso-2,6-diaminopimeloyl-D-alanyl-D-alanine + di-trans,octa-cis-undecaprenyl phosphate = di-trans,octa-cis-undecaprenyl diphospho-N-acetyl-alpha-D-muramoyl-L-alanyl-D-glutamyl-meso-2,6-diaminopimeloyl-D-alanyl-D-alanine + UMP. Its pathway is cell wall biogenesis; peptidoglycan biosynthesis. Its function is as follows. Catalyzes the initial step of the lipid cycle reactions in the biosynthesis of the cell wall peptidoglycan: transfers peptidoglycan precursor phospho-MurNAc-pentapeptide from UDP-MurNAc-pentapeptide onto the lipid carrier undecaprenyl phosphate, yielding undecaprenyl-pyrophosphoryl-MurNAc-pentapeptide, known as lipid I. In Bacillus pumilus (strain SAFR-032), this protein is Phospho-N-acetylmuramoyl-pentapeptide-transferase.